The following is a 151-amino-acid chain: MGTDDVARSEKIREGFQINWLILRDADTGKIIWQENKDFSCPDVEHEARVPIKILDLRAVSREINFSTVESMENFRLDQKVLFKGRIMEEWFFEMGWVSPNTTNTWQSTIEAAPESQMMPAKVLNGNVTIETSFFDGETLISKSVVRLYYT.

The protein belongs to the PDE6D/unc-119 family. Interacts with Pde6.

Its subcellular location is the nucleus. It is found in the cytoplasm. This is Probable cGMP 3',5'-cyclic phosphodiesterase subunit delta from Aedes aegypti (Yellowfever mosquito).